The chain runs to 92 residues: Small ribosomal subunit protein uS19 (92 aa).

The protein belongs to the universal ribosomal protein uS19 family.

Functionally, protein S19 forms a complex with S13 that binds strongly to the 16S ribosomal RNA. The protein is Small ribosomal subunit protein uS19 of Albidiferax ferrireducens (strain ATCC BAA-621 / DSM 15236 / T118) (Rhodoferax ferrireducens).